Here is a 239-residue protein sequence, read N- to C-terminus: LexA repressor (239 aa).

The segment at 1–40 is disordered; the sequence is MTEAATGPEGADPSRAARSLPGRPPGIRADSSGLTDRQRR. Residues 58–78 constitute a DNA-binding region (H-T-H motif); that stretch reads MREIGQAVGLSSTSSVAHQLM. Over residues 89-100 the composition is skewed to basic and acidic residues; sequence DPHRPRAYEVRG. A disordered region spans residues 89-116; sequence DPHRPRAYEVRGSDQPSAQPADTSGKPA. Catalysis depends on for autocatalytic cleavage activity residues S163 and K200.

Belongs to the peptidase S24 family. Homodimer.

It catalyses the reaction Hydrolysis of Ala-|-Gly bond in repressor LexA.. Its function is as follows. Represses a number of genes involved in the response to DNA damage (SOS response), including recA and lexA. In the presence of single-stranded DNA, RecA interacts with LexA causing an autocatalytic cleavage which disrupts the DNA-binding part of LexA, leading to derepression of the SOS regulon and eventually DNA repair. The chain is LexA repressor from Streptomyces clavuligerus.